The following is a 282-amino-acid chain: MALKEYKPTSPARRHMTVADFAEITKAKPEKRLTKPVRKSGGRNAHGKVTTRHIGGGHKRRYRVIDWRRDKDGVPAKVAAIEYDPNRTARIALLHYLDGEKRYILAPVGVAVGDTLVSGADVDIRPGNALPVRTIPLGTVIHNVETAPGSGAKMIRTAGSFGQLMAKEGGYAQIRLPSGEVRKVLQDCKATIGQLGNVESSSVRVGKAGKSRWLGIRPTVRGLAMNPVDHPHGGGEGKSGQGNPHPVSPWGQKTKGLKTRNNRRTDKFIVTRRRPGVRNTQR.

Disordered stretches follow at residues 31–55 and 223–282; these read KRLT…RHIG and LAMN…NTQR. Basic residues-rich tracts occupy residues 34 to 55 and 270 to 282; these read TKPV…RHIG and VTRR…NTQR.

Belongs to the universal ribosomal protein uL2 family. As to quaternary structure, part of the 50S ribosomal subunit. Forms a bridge to the 30S subunit in the 70S ribosome.

Functionally, one of the primary rRNA binding proteins. Required for association of the 30S and 50S subunits to form the 70S ribosome, for tRNA binding and peptide bond formation. It has been suggested to have peptidyltransferase activity; this is somewhat controversial. Makes several contacts with the 16S rRNA in the 70S ribosome. The polypeptide is Large ribosomal subunit protein uL2 (Anaeromyxobacter dehalogenans (strain 2CP-C)).